Consider the following 708-residue polypeptide: Protein SUPPRESSOR OF MAX2 1A (708 aa).

Residues Q248–T283 form a disordered region. The EAR motif lies at F537–E541.

The protein belongs to the ClpA/ClpB family.

In terms of biological role, probable component of a transcriptional corepressor complex that acts downstream of MAX2 to negatively regulate karrikins/strigolactone responses. Involved in the (-)-germacrene D signaling pathway influencing plant fitness and occurring in the stigma in a KAI2IA-dependent manner. This Petunia hybrida (Petunia) protein is Protein SUPPRESSOR OF MAX2 1A.